Reading from the N-terminus, the 263-residue chain is Achaete-scute homolog 2 (263 aa).

2 disordered regions span residues 104–126 (RRRR…RNER) and 194–248 (PPSD…ELSP). Low complexity-rich tracts occupy residues 110 to 121 (ATEASSSSAAVA), 202 to 220 (PSAS…SPSP), and 230 to 247 (SPRS…GELS). The region spanning 118 to 170 (AAVARRNERERNRVKLVNLGFQALRQHVPHGGANKKLSKVETLRSAVEYIRAL) is the bHLH domain.

Efficient DNA binding requires dimerization with another basic helix-loop-helix (bHLH) protein. Forms heterodimers with bHLH transcription factor TCF3. May not heterodimerise with bHLH protein HAND1. In terms of tissue distribution, expressed in follicular T-helper (Tfh) cells.

The protein localises to the nucleus. Transcription factor. Binds to E-box motifs 5'-CANNTG-3' in the regulatory elements of target genes, probably as a heterodimer with another basic helix-loop-helix (bHLH) protein such as the transcription factor TCF3. May bind both open and closed chromatin, acting as a pioneer transcription factor to allow other factors to bind and activate lineage-specific genes. Required during post-implantation development for the generation of some differentiated trophoblast cell types. Transcriptional activity of ASCL2 may be antagonised in a subset of trophoblast cells by bHLH transcription factor HAND1, perhaps by competing for dimerization with other bHLH proteins. Involved in differentiation and function of follicular T-helper (Tfh) cells, thereby playing a role in germinal center responses; probably modulates expression of genes involved in Tfh cell function, such as BCL6. May also act as a suppressor of Th1-, Th2- and Th17-cell differentiation. Induces the formation of stem cells in intestinal crypts in vitro, synergistically activating transcription of target genes, such as SOX9, together with TCF4/beta-catenin. May form a bistable transcriptional switch, controlling expression of its own gene together with Wnt/R-spondin signaling, and thereby maintaining stem cell characteristics. Modulates expression of target genes, including perhaps down-regulating EGR1/Krox24 and chemokine CXCL10/Mob-1 and up-regulating CXCR4 and CDKN1C/p57kip2, in Schwann cells. May play a role in reducing proliferation of Schwann cells, perhaps acting via modulation of expression of CDKN1C. May be dispensable for blastocyst formation and later embryonic function. May be involved in the determination of neuronal precursors. This is Achaete-scute homolog 2 (Ascl2) from Mus musculus (Mouse).